We begin with the raw amino-acid sequence, 80 residues long: Conotoxin Cl10.1 (80 aa).

Residues 1–20 (MTTLGMTMLVLLLLLPLATC) form the signal peptide. Residues 21–36 (LGDGERSPWDSLLRAL) constitute a propeptide that is removed on maturation.

In terms of processing, contains 4 disulfide bonds. As to expression, expressed by the venom duct.

It localises to the secreted. The sequence is that of Conotoxin Cl10.1 from Californiconus californicus (California cone).